Consider the following 285-residue polypeptide: Ribosomal RNA small subunit methyltransferase I (285 aa).

It belongs to the methyltransferase superfamily. RsmI family.

The protein localises to the cytoplasm. It catalyses the reaction cytidine(1402) in 16S rRNA + S-adenosyl-L-methionine = 2'-O-methylcytidine(1402) in 16S rRNA + S-adenosyl-L-homocysteine + H(+). In terms of biological role, catalyzes the 2'-O-methylation of the ribose of cytidine 1402 (C1402) in 16S rRNA. This chain is Ribosomal RNA small subunit methyltransferase I, found in Buchnera aphidicola subsp. Schizaphis graminum (strain Sg).